An 800-amino-acid chain; its full sequence is Cell division cycle 5-like protein (800 aa).

HTH myb-type domains are found at residues 1–56 and 57–106; these read MRNV…DPSI and KKTE…DEVQ. 2 DNA-binding regions (H-T-H motif) span residues 29 to 52 and 80 to 102; these read WARI…HEWL and WKTI…NRLL. Disordered stretches follow at residues 109–186, 334–378, 399–445, and 571–610; these read QDNE…KRKF, YEKL…NIRT, QTPL…KQSL, and NKTF…NDND. Gly residues predominate over residues 113-122; sequence NGGGSGGGGT. The segment covering 133–142 has biased composition (basic and acidic residues); sequence NDPRRLRMGD. Over residues 340-351 the composition is skewed to gly residues; that stretch reads SGSGGGSGGVGV. Over residues 361 to 376 the composition is skewed to low complexity; the sequence is TASISSTAANNNTNNI. Polar residues-rich tracts occupy residues 409–445 and 573–584; these read NVSQ…KQSL and TFPNDSITPSST. Over residues 592-601 the composition is skewed to basic and acidic residues; the sequence is DNHHHHHDDI. Coiled-coil stretches lie at residues 621-700 and 748-800; these read NTEL…KIKN and VALK…LSIF.

It belongs to the CEF1 family. In terms of assembly, component of the precatalytic, catalytic and postcatalytic spliceosome complexes.

The protein resides in the nucleus. Its subcellular location is the cytoplasm. In terms of biological role, DNA-binding protein involved in cell cycle control. May act as a transcription activator. Plays a role in pre-mRNA splicing as core component of precatalytic, catalytic and postcatalytic spliceosomal complexes. May also play a role in the response to DNA damage (DDR). This Dictyostelium discoideum (Social amoeba) protein is Cell division cycle 5-like protein (cdc5l).